We begin with the raw amino-acid sequence, 156 residues long: Cytochrome c-type biogenesis protein CcmE (156 aa).

The Cytoplasmic portion of the chain corresponds to 1-7; sequence MTRRQRR. Residues 8–28 form a helical; Signal-anchor for type II membrane protein membrane-spanning segment; it reads LGILLAALVCAGAATALTLNA. At 29 to 156 the chain is on the periplasmic side; the sequence is FRSNLVFFFS…AKESARSASR (128 aa). Heme is bound by residues histidine 123 and tyrosine 127.

This sequence belongs to the CcmE/CycJ family.

It localises to the cell inner membrane. In terms of biological role, heme chaperone required for the biogenesis of c-type cytochromes. Transiently binds heme delivered by CcmC and transfers the heme to apo-cytochromes in a process facilitated by CcmF and CcmH. The sequence is that of Cytochrome c-type biogenesis protein CcmE from Ralstonia pickettii (strain 12J).